We begin with the raw amino-acid sequence, 306 residues long: 4-hydroxy-3-methylbut-2-enyl diphosphate reductase 1 (306 aa).

Cys-10 is a [4Fe-4S] cluster binding site. (2E)-4-hydroxy-3-methylbut-2-enyl diphosphate is bound by residues His-39 and His-72. Residues His-39 and His-72 each contribute to the dimethylallyl diphosphate site. Positions 39 and 72 each coordinate isopentenyl diphosphate. Cys-94 lines the [4Fe-4S] cluster pocket. (2E)-4-hydroxy-3-methylbut-2-enyl diphosphate is bound at residue His-122. Residue His-122 coordinates dimethylallyl diphosphate. His-122 lines the isopentenyl diphosphate pocket. Glu-124 serves as the catalytic Proton donor. Thr-162 provides a ligand contact to (2E)-4-hydroxy-3-methylbut-2-enyl diphosphate. Cys-192 contributes to the [4Fe-4S] cluster binding site. Ser-220, Ser-221, Asn-222, and Ser-264 together coordinate (2E)-4-hydroxy-3-methylbut-2-enyl diphosphate. Residues Ser-220, Ser-221, Asn-222, and Ser-264 each coordinate dimethylallyl diphosphate. Isopentenyl diphosphate-binding residues include Ser-220, Ser-221, Asn-222, and Ser-264.

This sequence belongs to the IspH family. The cofactor is [4Fe-4S] cluster.

It catalyses the reaction isopentenyl diphosphate + 2 oxidized [2Fe-2S]-[ferredoxin] + H2O = (2E)-4-hydroxy-3-methylbut-2-enyl diphosphate + 2 reduced [2Fe-2S]-[ferredoxin] + 2 H(+). The enzyme catalyses dimethylallyl diphosphate + 2 oxidized [2Fe-2S]-[ferredoxin] + H2O = (2E)-4-hydroxy-3-methylbut-2-enyl diphosphate + 2 reduced [2Fe-2S]-[ferredoxin] + 2 H(+). It functions in the pathway isoprenoid biosynthesis; dimethylallyl diphosphate biosynthesis; dimethylallyl diphosphate from (2E)-4-hydroxy-3-methylbutenyl diphosphate: step 1/1. The protein operates within isoprenoid biosynthesis; isopentenyl diphosphate biosynthesis via DXP pathway; isopentenyl diphosphate from 1-deoxy-D-xylulose 5-phosphate: step 6/6. Its function is as follows. Catalyzes the conversion of 1-hydroxy-2-methyl-2-(E)-butenyl 4-diphosphate (HMBPP) into a mixture of isopentenyl diphosphate (IPP) and dimethylallyl diphosphate (DMAPP). Acts in the terminal step of the DOXP/MEP pathway for isoprenoid precursor biosynthesis. This Rhodopseudomonas palustris (strain ATCC BAA-98 / CGA009) protein is 4-hydroxy-3-methylbut-2-enyl diphosphate reductase 1.